Consider the following 253-residue polypeptide: DNA repair protein RecO (253 aa).

The protein belongs to the RecO family.

Functionally, involved in DNA repair and RecF pathway recombination. This chain is DNA repair protein RecO, found in Dehalococcoides mccartyi (strain ATCC BAA-2100 / JCM 16839 / KCTC 5957 / BAV1).